The following is a 436-amino-acid chain: Chromosomal replication initiator protein DnaA (436 aa).

Residues 1 to 80 (MSHEAVWQHV…QAPRFELRVV (80 aa)) are domain I, interacts with DnaA modulators. Residues 80-100 (VPGVVVQEDIFQAAPAEAPRP) are domain II. Residues 101–317 (KLNPKYTFEN…GALMRAIAFA (217 aa)) form a domain III, AAA+ region region. Residues Gly-145, Gly-147, Lys-148, and Thr-149 each coordinate ATP. The domain IV, binds dsDNA stretch occupies residues 318 to 436 (SLNGVELTRA…LLRTLREACT (119 aa)).

This sequence belongs to the DnaA family. As to quaternary structure, oligomerizes as a right-handed, spiral filament on DNA at oriC.

The protein resides in the cytoplasm. It catalyses the reaction ATP + H2O = ADP + phosphate + H(+). Plays an essential role in the initiation and regulation of chromosomal replication. ATP-DnaA binds to the origin of replication (oriC) to initiate formation of the DNA replication initiation complex once per cell cycle. Binds the DnaA box (a 9 base pair repeat at the origin) and separates the double-stranded (ds)DNA. Forms a right-handed helical filament on oriC DNA; dsDNA binds to the exterior of the filament while single-stranded (ss)DNA is stabiized in the filament's interior. The ATP-DnaA-oriC complex binds and stabilizes one strand of the AT-rich DNA unwinding element (DUE), permitting loading of DNA polymerase. After initiation quickly degrades to an ADP-DnaA complex that is not apt for DNA replication. Binds acidic phospholipids. Functionally, the DnaA box consensus is 5'-TTATC[CA]A[CA]A-3' in this bacterium; oriC consists of 13 clustered DnaA boxes and a 40 base pair AT-rich region. ATP-DnaA binds cooperatively to multiple DnaA boxes, while ADP-DnaA binds with low cooperativity to the individual DnaA boxes. About 16-18 DnaA protein molecules bind their sites in oriC. Has a slow ATPase activity. Binds linear and supercoiled DNA. This Thermus thermophilus (strain ATCC 27634 / DSM 579 / HB8) protein is Chromosomal replication initiator protein DnaA.